The chain runs to 149 residues: F420H(2)-dependent quinone reductase MT1299 (149 aa).

Coenzyme F420-(gamma-Glu)n is bound by residues 48-50, 54-59, 70-73, 81-85, and Tyr130; these read AKT, RTTSLT, VASK, and GWYHN.

Belongs to the F420H(2)-dependent quinone reductase family.

The protein resides in the cell membrane. The enzyme catalyses oxidized coenzyme F420-(gamma-L-Glu)(n) + a quinol + H(+) = reduced coenzyme F420-(gamma-L-Glu)(n) + a quinone. Its function is as follows. Involved in a F420-dependent anti-oxidant mechanism that protects M.tuberculosis against oxidative stress and bactericidal agents. Catalyzes the F420H(2)-dependent two-electron reduction of quinones to dihydroquinones, thereby preventing the formation of cytotoxic semiquinones obtained by the one-electron reduction pathway. In vitro, catalyzes the reduction of menadione to menadiol; since menaquinone is the sole quinone electron carrier in the respiratory chain in M.tuberculosis, the physiological electron acceptor for Fqr-mediated F420H(2) oxidation is therefore likely to be the endogenous menaquinone found in the membrane fraction of M.tuberculosis. The protein is F420H(2)-dependent quinone reductase MT1299 of Mycobacterium tuberculosis (strain CDC 1551 / Oshkosh).